Here is a 1165-residue protein sequence, read N- to C-terminus: Peroxisomal ATPase PEX6 (1165 aa).

This sequence belongs to the AAA ATPase family. In terms of assembly, interacts with PEX1; forming the PEX1-PEX6 AAA ATPase complex, which is composed of a heterohexamer formed by a trimer of PEX1-PEX6 dimers.

The protein resides in the membrane. It catalyses the reaction ATP + H2O = ADP + phosphate + H(+). Its function is as follows. Component of the PEX1-PEX6 AAA ATPase complex involved in peroxisome biosynthesis. The complex acts as a protein dislocase complex that mediates the ATP-dependent extraction of the PEX5 receptor from peroxisomal membranes, an essential step for PEX5 recycling. Specifically recognizes PEX5 monoubiquitinated at 'Cys-6', and pulls it out of the peroxisome lumen through the PEX2-PEX10-PEX12 retrotranslocation channel. Extraction by the PEX1-PEX6 AAA ATPase complex is accompanied by unfolding of the TPR repeats and release of bound cargo from PEX5. This Komagataella pastoris (Yeast) protein is Peroxisomal ATPase PEX6.